The chain runs to 423 residues: MTTKLKGLKELGNTSDPLRTVSYQVRTKMSDYEDDNTDVQSLTVEEEYELWNSNVPVMYEFVSETKLTWPSLTIQWLPSDGQSPEQSLIFGTHTAGEEVNYLKVATINLPAGIAGLDQGDEEDEANDHSSFAIANKFPHIEEVIRARYMPANSNIIATINGKGTISIFDRTLEESKAQVSTLAFHKENGYGLAFNPHISGELLSGSDDTTVALWDIEAAKKPKSILTSHDDIVNDVKWHEFESNVFGTVSEDKTLQVHDKRVRLEPVKKLPTASPFNTLSFSKHSRNLLAAAGVDSQIYLYDMRDMSSPLHVMSGHQDSVTTVEFSPHTDGIICSSGSDRRAIIWDLTQIGAEQSQDDADDGAPELMMMHAGHRSPVNEFSFNPQIPWLLASTEEDNVIQAWKVSMKLVNASPPAISDPSLLV.

WD repeat units follow at residues 138–174 (PHIE…TLEE), 175–224 (SKAQ…KPKS), 228–268 (SHDD…EPVK), 271–311 (PTAS…SPLH), and 315–355 (GHQD…AEQS). Positions 357–361 (DDADD) are interaction with the histone H4 N-terminus. One copy of the WD 6 repeat lies at 372 to 412 (GHRSPVNEFSFNPQIPWLLASTEEDNVIQAWKVSMKLVNAS).

The protein belongs to the WD repeat RBAP46/RBAP48/MSI1 family. In terms of assembly, component of the HAT-B complex composed of at least HAT1 and HAT2. The HAT-B complex binds to histone H4 tail.

The protein localises to the cytoplasm. The protein resides in the nucleus. Regulatory subunit of the histone acetylase B (HAT-B) complex. The complex acetylates 'Lys-12' of histone H4 which is required for telomeric silencing. In Eremothecium gossypii (strain ATCC 10895 / CBS 109.51 / FGSC 9923 / NRRL Y-1056) (Yeast), this protein is Histone acetyltransferase type B subunit 2 (HAT2).